The following is a 703-amino-acid chain: Zinc finger CCCH domain-containing protein 36 (703 aa).

4 disordered regions span residues 1 to 42, 112 to 176, 204 to 242, and 442 to 481; these read MAGG…DPNG, LQLH…MKNK, VSGS…AGSS, and HGTL…SSSQ. A compositionally biased stretch (low complexity) spans 9-25; that stretch reads GLPAAGEAAKAGRVGVG. The segment covering 112–125 has biased composition (basic and acidic residues); it reads LQLHGDEKYQKKAG. Positions 149-169 are enriched in polar residues; that stretch reads VSQSPPDSNALSSQRFGSSSP. The segment at 176 to 203 adopts a C3H1-type zinc-finger fold; it reads KTRKRTCTFYAQGRCKNGKSCTFLHEGE. A compositionally biased stretch (basic and acidic residues) spans 451–468; it reads TPDKDASHHKGADFDKGG. The segment covering 470–481 has biased composition (low complexity); it reads SRSTLHVSSSSQ.

This chain is Zinc finger CCCH domain-containing protein 36, found in Oryza sativa subsp. japonica (Rice).